Here is a 175-residue protein sequence, read N- to C-terminus: NADH-ubiquinone oxidoreductase chain 6 (175 aa).

A run of 5 helical transmembrane segments spans residues 1-21 (MMIY…VGFS), 25-45 (SPIY…GIVM), 47-67 (FGGS…MLVV), 88-108 (TVLS…LYMF), and 149-169 (YGVW…LVVL).

The protein belongs to the complex I subunit 6 family. Core subunit of respiratory chain NADH dehydrogenase (Complex I) which is composed of 45 different subunits.

It localises to the mitochondrion inner membrane. The catalysed reaction is a ubiquinone + NADH + 5 H(+)(in) = a ubiquinol + NAD(+) + 4 H(+)(out). Functionally, core subunit of the mitochondrial membrane respiratory chain NADH dehydrogenase (Complex I) which catalyzes electron transfer from NADH through the respiratory chain, using ubiquinone as an electron acceptor. Essential for the catalytic activity and assembly of complex I. The protein is NADH-ubiquinone oxidoreductase chain 6 (MT-ND6) of Rhinoceros unicornis (Greater Indian rhinoceros).